The sequence spans 103 residues: MGKLTLLLLAILVWLQYSLWFGKNGIHDYSRVNDDVAAQQATNAKLKARNDQLFAEIDDLNGGQEALEERARNELSMTKPGETFYRLVPDASKRAQTAGQNNR.

At 1-3 the chain is on the cytoplasmic side; the sequence is MGK. Residues 4–21 traverse the membrane as a helical segment; the sequence is LTLLLLAILVWLQYSLWF. At 22 to 103 the chain is on the periplasmic side; that stretch reads GKNGIHDYSR…RAQTAGQNNR (82 aa). Residues 31–71 are a coiled coil; that stretch reads RVNDDVAAQQATNAKLKARNDQLFAEIDDLNGGQEALEERA.

Belongs to the FtsB family. As to quaternary structure, part of a complex composed of FtsB, FtsL and FtsQ.

The protein resides in the cell inner membrane. Essential cell division protein. May link together the upstream cell division proteins, which are predominantly cytoplasmic, with the downstream cell division proteins, which are predominantly periplasmic. The sequence is that of Cell division protein FtsB from Escherichia fergusonii (strain ATCC 35469 / DSM 13698 / CCUG 18766 / IAM 14443 / JCM 21226 / LMG 7866 / NBRC 102419 / NCTC 12128 / CDC 0568-73).